Consider the following 313-residue polypeptide: tRNA dimethylallyltransferase (313 aa).

11–18 (GPTAGGKT) contributes to the ATP binding site. Substrate is bound at residue 13–18 (TAGGKT). Interaction with substrate tRNA regions lie at residues 36–39 (DSAL), 160–164 (QRIGR), and 243–248 (RCVGYR).

The protein belongs to the IPP transferase family. In terms of assembly, monomer. Mg(2+) is required as a cofactor.

It catalyses the reaction adenosine(37) in tRNA + dimethylallyl diphosphate = N(6)-dimethylallyladenosine(37) in tRNA + diphosphate. Functionally, catalyzes the transfer of a dimethylallyl group onto the adenine at position 37 in tRNAs that read codons beginning with uridine, leading to the formation of N6-(dimethylallyl)adenosine (i(6)A). The polypeptide is tRNA dimethylallyltransferase (Neisseria meningitidis serogroup C / serotype 2a (strain ATCC 700532 / DSM 15464 / FAM18)).